Consider the following 1502-residue polypeptide: E3 ubiquitin-protein ligase UPL4 (1502 aa).

The span at 1-21 (MENRGQKRMEVVEELPADKRA) shows a compositional bias: basic and acidic residues. The tract at residues 1–107 (MENRGQKRME…DYQRQRSSGD (107 aa)) is disordered. A compositionally biased stretch (polar residues) spans 22 to 46 (CNSQDFRPSTSGSSVQAQANDTNPG). Residues 67–90 (DEEEQEEQDKEDSDYGSCDSDEED) show a composition bias toward acidic residues. Residues 91-107 (PRQRVLQDYQRQRSSGD) show a composition bias toward basic and acidic residues. 4 ARM repeats span residues 143-183 (EESL…YLCD), 186-226 (PPSV…KISR), 228-265 (EPVA…NICK), and 267-306 (LSSE…KIAD). Positions 833 to 881 (CQAESSSPMEIDSESSDASQLQGSQVEDQTQLPGQQNASSSETSSEKED) are disordered. A compositionally biased stretch (polar residues) spans 849 to 875 (DASQLQGSQVEDQTQLPGQQNASSSET). The tract at residues 1022-1096 (RPVPHSEFVS…IRHHPQHLSS (75 aa)) is K-box. Residues 1128-1502 (KMMELYGNQK…TEGQGSFHLS (375 aa)) form the HECT domain. Catalysis depends on C1469, which acts as the Glycyl thioester intermediate.

This sequence belongs to the UPL family. K-HECT subfamily.

It carries out the reaction S-ubiquitinyl-[E2 ubiquitin-conjugating enzyme]-L-cysteine + [acceptor protein]-L-lysine = [E2 ubiquitin-conjugating enzyme]-L-cysteine + N(6)-ubiquitinyl-[acceptor protein]-L-lysine.. It functions in the pathway protein modification; protein ubiquitination. Its function is as follows. Probable E3 ubiquitin-protein ligase which mediates ubiquitination and subsequent proteasomal degradation of target proteins. This Arabidopsis thaliana (Mouse-ear cress) protein is E3 ubiquitin-protein ligase UPL4 (UPL4).